The sequence spans 598 residues: UvrABC system protein C (598 aa).

The GIY-YIG domain maps to 13 to 92; that stretch reads SSPGVYLMKD…IKKYQPRYNV (80 aa). The 36-residue stretch at 206–241 folds into the UVR domain; it reads RSTISNLEKAIEKASQEQKFEHAAALYRTLTLIRQT.

The protein belongs to the UvrC family. In terms of assembly, interacts with UvrB in an incision complex.

Its subcellular location is the cytoplasm. In terms of biological role, the UvrABC repair system catalyzes the recognition and processing of DNA lesions. UvrC both incises the 5' and 3' sides of the lesion. The N-terminal half is responsible for the 3' incision and the C-terminal half is responsible for the 5' incision. This is UvrABC system protein C from Chlamydia trachomatis serovar A (strain ATCC VR-571B / DSM 19440 / HAR-13).